The sequence spans 106 residues: Immunoglobulin lambda constant 3 (106 aa).

The Ig-like domain occupies 7–101 (PSVTLFPPSS…EGSTVEKTVA (95 aa)). The cysteines at positions 28 and 87 are disulfide-linked.

Immunoglobulins are composed of two identical heavy chains and two identical light chains; disulfide-linked.

It is found in the secreted. The protein resides in the cell membrane. In terms of biological role, constant region of immunoglobulin light chains. Immunoglobulins, also known as antibodies, are membrane-bound or secreted glycoproteins produced by B lymphocytes. In the recognition phase of humoral immunity, the membrane-bound immunoglobulins serve as receptors which, upon binding of a specific antigen, trigger the clonal expansion and differentiation of B lymphocytes into immunoglobulins-secreting plasma cells. Secreted immunoglobulins mediate the effector phase of humoral immunity, which results in the elimination of bound antigens. The antigen binding site is formed by the variable domain of one heavy chain, together with that of its associated light chain. Thus, each immunoglobulin has two antigen binding sites with remarkable affinity for a particular antigen. The variable domains are assembled by a process called V-(D)-J rearrangement and can then be subjected to somatic hypermutations which, after exposure to antigen and selection, allow affinity maturation for a particular antigen. In Homo sapiens (Human), this protein is Immunoglobulin lambda constant 3.